Consider the following 628-residue polypeptide: NUAK family SNF1-like kinase 2 (628 aa).

At Met1 the chain carries N-acetylmethionine. The 251-residue stretch at 53-303 (YEFLETLGKG…LEDVASHWWV (251 aa)) folds into the Protein kinase domain. Residues 59 to 67 (LGKGTYGKV) and Lys81 contribute to the ATP site. Asp175 functions as the Proton acceptor in the catalytic mechanism. Thr208 bears the Phosphothreonine; by LKB1 mark. The interval 355-493 (KQHAPGGGST…KEQKPPQASG (139 aa)) is disordered. Ser435 carries the post-translational modification Phosphoserine. Positions 457 to 469 (SGYYSSPEPSESG) are enriched in low complexity. Phosphoserine occurs at positions 523, 544, 547, and 573. Positions 531–562 (RPLARASRPSGAVSEDSILSSESFDQLDLPER) are disordered.

Belongs to the protein kinase superfamily. CAMK Ser/Thr protein kinase family. SNF1 subfamily. Mg(2+) serves as cofactor. Post-translationally, phosphorylated at Thr-208 by STK11/LKB1 in complex with STE20-related adapter-alpha (STRADA) pseudo kinase and CAB39. Autophosphorylation is also possible at Thr-208.

The catalysed reaction is L-seryl-[protein] + ATP = O-phospho-L-seryl-[protein] + ADP + H(+). The enzyme catalyses L-threonyl-[protein] + ATP = O-phospho-L-threonyl-[protein] + ADP + H(+). Its activity is regulated as follows. Activated by phosphorylation on Thr-208. In terms of biological role, stress-activated kinase involved in tolerance to glucose starvation. Induces cell-cell detachment by increasing F-actin conversion to G-actin. Expression is induced by CD95 or TNF-alpha, via NF-kappa-B. Protects cells from CD95-mediated apoptosis and is required for the increased motility and invasiveness of CD95-activated tumor cells. Phosphorylates LATS1 and LATS2. Plays a key role in neural tube closure during embryonic development through LATS2 phosphorylation and regulation of the nuclear localization of YAP1 a critical downstream regulatory target in the Hippo signaling pathway. In Homo sapiens (Human), this protein is NUAK family SNF1-like kinase 2.